Here is a 382-residue protein sequence, read N- to C-terminus: Pyrimidine monooxygenase RutA (382 aa).

Residues 68-69 (IK), Asn134, Glu143, 159-160 (RY), and Ser209 contribute to the FMN site.

Belongs to the NtaA/SnaA/DszA monooxygenase family. RutA subfamily.

It carries out the reaction uracil + FMNH2 + NADH + O2 = (Z)-3-ureidoacrylate + FMN + NAD(+) + H2O + H(+). The enzyme catalyses thymine + FMNH2 + NADH + O2 = (Z)-2-methylureidoacrylate + FMN + NAD(+) + H2O + H(+). Functionally, catalyzes the pyrimidine ring opening between N-3 and C-4 by an unusual flavin hydroperoxide-catalyzed mechanism, adding oxygen atoms in the process to yield ureidoacrylate peracid, that immediately reacts with FMN forming ureidoacrylate and FMN-N(5)-oxide. The FMN-N(5)-oxide reacts spontaneously with NADH to produce FMN. Requires the flavin reductase RutF to regenerate FMN in vivo. The sequence is that of Pyrimidine monooxygenase RutA from Escherichia coli (strain 55989 / EAEC).